The following is a 185-amino-acid chain: UPF0669 protein C6orf120 homolog (185 aa).

An N-terminal signal peptide occupies residues 1–23; it reads MATPWRCALLMILASQVVILVKC. The N-linked (GlcNAc...) asparagine glycan is linked to N47.

It belongs to the UPF0669 family.

It localises to the secreted. May be involved in induction of apoptosis in CD4(+) T-cells, but not CD8(+) T-cells or hepatocytes. This is UPF0669 protein C6orf120 homolog from Rattus norvegicus (Rat).